We begin with the raw amino-acid sequence, 178 residues long: Large ribosomal subunit protein uL6 (178 aa).

Belongs to the universal ribosomal protein uL6 family. As to quaternary structure, part of the 50S ribosomal subunit.

Its function is as follows. This protein binds to the 23S rRNA, and is important in its secondary structure. It is located near the subunit interface in the base of the L7/L12 stalk, and near the tRNA binding site of the peptidyltransferase center. This is Large ribosomal subunit protein uL6 from Campylobacter fetus subsp. fetus (strain 82-40).